We begin with the raw amino-acid sequence, 147 residues long: Hemoglobin subunit deltaH (147 aa).

Positions 3–147 (RLTDSEKAEV…MANALAHKYH (145 aa)) constitute a Globin domain. The heme b site is built by His-64 and His-93.

It belongs to the globin family. As to quaternary structure, heterotetramer of two delta chains and two alpha chains. Red blood cells.

This Heterohyrax brucei (Yellow-spotted hyrax) protein is Hemoglobin subunit deltaH.